The following is a 606-amino-acid chain: NADH-ubiquinone oxidoreductase chain 5 (606 aa).

16 helical membrane passes run 1–21 (MNIF…PIIA), 38–58 (NIIS…IYSG), 87–107 (MIFV…SIWY), 114–134 (ITQF…LVTA), 140–160 (LFIG…WWYG), 171–191 (AILY…WFLS), 213–233 (LMGL…HPWL), 241–261 (TPVS…FLLI), 273–293 (AQTL…ICAL), 301–320 (IIAF…IGIN), 325–347 (AFLH…GSII), 366–386 (MPFT…MPFL), 409–429 (LLMT…MIFF), 457–477 (LLIG…PTTT), 488–508 (LMAL…SLAT), and 582–602 (GLIK…LLLL).

This sequence belongs to the complex I subunit 5 family. As to quaternary structure, core subunit of respiratory chain NADH dehydrogenase (Complex I) which is composed of 45 different subunits.

It is found in the mitochondrion inner membrane. The enzyme catalyses a ubiquinone + NADH + 5 H(+)(in) = a ubiquinol + NAD(+) + 4 H(+)(out). In terms of biological role, core subunit of the mitochondrial membrane respiratory chain NADH dehydrogenase (Complex I) which catalyzes electron transfer from NADH through the respiratory chain, using ubiquinone as an electron acceptor. Essential for the catalytic activity and assembly of complex I. The protein is NADH-ubiquinone oxidoreductase chain 5 (MT-ND5) of Rhinoceros unicornis (Greater Indian rhinoceros).